The sequence spans 209 residues: Putative tripartite motif-containing protein 61 (209 aa).

The segment at 16–57 (CPICLDYLKDPVTISCGHNFCLSCIIMSWKDLHDSFPCPFCH) adopts an RING-type zinc-finger fold. The B box-type zinc-finger motif lies at 92 to 133 (EEKHVCKKHNQVLTFFCQKDLELLCPRCSLSTDHQHHCVWPI). The Zn(2+) site is built by Cys97, His100, Cys119, and His125.

In Homo sapiens (Human), this protein is Putative tripartite motif-containing protein 61 (TRIM61).